The following is a 193-amino-acid chain: Pyridoxal 5'-phosphate synthase subunit PdxT (193 aa).

48–50 (GES) contacts L-glutamine. Cys80 (nucleophile) is an active-site residue. L-glutamine is bound by residues Arg107 and 136–137 (IR). Active-site charge relay system residues include His172 and Glu174.

The protein belongs to the glutaminase PdxT/SNO family. In terms of assembly, in the presence of PdxS, forms a dodecamer of heterodimers. Only shows activity in the heterodimer.

The catalysed reaction is aldehydo-D-ribose 5-phosphate + D-glyceraldehyde 3-phosphate + L-glutamine = pyridoxal 5'-phosphate + L-glutamate + phosphate + 3 H2O + H(+). It carries out the reaction L-glutamine + H2O = L-glutamate + NH4(+). The protein operates within cofactor biosynthesis; pyridoxal 5'-phosphate biosynthesis. Catalyzes the hydrolysis of glutamine to glutamate and ammonia as part of the biosynthesis of pyridoxal 5'-phosphate. The resulting ammonia molecule is channeled to the active site of PdxS. In Clostridium botulinum (strain Loch Maree / Type A3), this protein is Pyridoxal 5'-phosphate synthase subunit PdxT.